We begin with the raw amino-acid sequence, 158 residues long: 2-C-methyl-D-erythritol 2,4-cyclodiphosphate synthase (158 aa).

Residues Asp-9 and His-11 each contribute to the a divalent metal cation site. Residues Asp-9 to His-11 and His-35 to Ser-36 each bind 4-CDP-2-C-methyl-D-erythritol 2-phosphate. His-43 provides a ligand contact to a divalent metal cation. Residues Asp-57–Gly-59, Phe-62–Asp-66, Ala-101–Ala-107, Thr-133–Glu-136, Phe-140, and Arg-143 contribute to the 4-CDP-2-C-methyl-D-erythritol 2-phosphate site.

It belongs to the IspF family. In terms of assembly, homotrimer. The cofactor is a divalent metal cation.

The enzyme catalyses 4-CDP-2-C-methyl-D-erythritol 2-phosphate = 2-C-methyl-D-erythritol 2,4-cyclic diphosphate + CMP. It functions in the pathway isoprenoid biosynthesis; isopentenyl diphosphate biosynthesis via DXP pathway; isopentenyl diphosphate from 1-deoxy-D-xylulose 5-phosphate: step 4/6. Its function is as follows. Involved in the biosynthesis of isopentenyl diphosphate (IPP) and dimethylallyl diphosphate (DMAPP), two major building blocks of isoprenoid compounds. Catalyzes the conversion of 4-diphosphocytidyl-2-C-methyl-D-erythritol 2-phosphate (CDP-ME2P) to 2-C-methyl-D-erythritol 2,4-cyclodiphosphate (ME-CPP) with a corresponding release of cytidine 5-monophosphate (CMP). The polypeptide is 2-C-methyl-D-erythritol 2,4-cyclodiphosphate synthase (Geobacillus sp. (strain WCH70)).